The following is a 339-amino-acid chain: Glycerol-3-phosphate dehydrogenase [NAD(P)+] (339 aa).

Residues S15, Y16, H36, and K110 each contribute to the NADPH site. Sn-glycerol 3-phosphate contacts are provided by K110, G139, and T141. A143 is a binding site for NADPH. Sn-glycerol 3-phosphate-binding residues include K195, D248, S258, R259, and N260. The active-site Proton acceptor is K195. Position 259 (R259) interacts with NADPH. V283 and E285 together coordinate NADPH.

Belongs to the NAD-dependent glycerol-3-phosphate dehydrogenase family.

Its subcellular location is the cytoplasm. The catalysed reaction is sn-glycerol 3-phosphate + NAD(+) = dihydroxyacetone phosphate + NADH + H(+). It carries out the reaction sn-glycerol 3-phosphate + NADP(+) = dihydroxyacetone phosphate + NADPH + H(+). It functions in the pathway membrane lipid metabolism; glycerophospholipid metabolism. Functionally, catalyzes the reduction of the glycolytic intermediate dihydroxyacetone phosphate (DHAP) to sn-glycerol 3-phosphate (G3P), the key precursor for phospholipid synthesis. The sequence is that of Glycerol-3-phosphate dehydrogenase [NAD(P)+] from Klebsiella pneumoniae subsp. pneumoniae (strain ATCC 700721 / MGH 78578).